The following is a 180-amino-acid chain: Large ribosomal subunit protein uL5 (180 aa).

The protein belongs to the universal ribosomal protein uL5 family. In terms of assembly, part of the 50S ribosomal subunit; part of the 5S rRNA/L5/L18/L25 subcomplex. Contacts the 5S rRNA and the P site tRNA. Forms a bridge to the 30S subunit in the 70S ribosome.

Functionally, this is one of the proteins that bind and probably mediate the attachment of the 5S RNA into the large ribosomal subunit, where it forms part of the central protuberance. In the 70S ribosome it contacts protein S13 of the 30S subunit (bridge B1b), connecting the 2 subunits; this bridge is implicated in subunit movement. Contacts the P site tRNA; the 5S rRNA and some of its associated proteins might help stabilize positioning of ribosome-bound tRNAs. The protein is Large ribosomal subunit protein uL5 of Synechocystis sp. (strain ATCC 27184 / PCC 6803 / Kazusa).